The following is a 293-amino-acid chain: Phosphoribosylaminoimidazole-succinocarboxamide synthase (293 aa).

It belongs to the SAICAR synthetase family.

The catalysed reaction is 5-amino-1-(5-phospho-D-ribosyl)imidazole-4-carboxylate + L-aspartate + ATP = (2S)-2-[5-amino-1-(5-phospho-beta-D-ribosyl)imidazole-4-carboxamido]succinate + ADP + phosphate + 2 H(+). It functions in the pathway purine metabolism; IMP biosynthesis via de novo pathway; 5-amino-1-(5-phospho-D-ribosyl)imidazole-4-carboxamide from 5-amino-1-(5-phospho-D-ribosyl)imidazole-4-carboxylate: step 1/2. The polypeptide is Phosphoribosylaminoimidazole-succinocarboxamide synthase (Bordetella petrii (strain ATCC BAA-461 / DSM 12804 / CCUG 43448)).